The following is a 407-amino-acid chain: Phosphopentomutase (407 aa).

Mn(2+)-binding residues include Asp11, Asp305, His310, Asp346, His347, and His358.

It belongs to the phosphopentomutase family. Mn(2+) is required as a cofactor.

The protein localises to the cytoplasm. It carries out the reaction 2-deoxy-alpha-D-ribose 1-phosphate = 2-deoxy-D-ribose 5-phosphate. The enzyme catalyses alpha-D-ribose 1-phosphate = D-ribose 5-phosphate. It participates in carbohydrate degradation; 2-deoxy-D-ribose 1-phosphate degradation; D-glyceraldehyde 3-phosphate and acetaldehyde from 2-deoxy-alpha-D-ribose 1-phosphate: step 1/2. Its function is as follows. Isomerase that catalyzes the conversion of deoxy-ribose 1-phosphate (dRib-1-P) and ribose 1-phosphate (Rib-1-P) to deoxy-ribose 5-phosphate (dRib-5-P) and ribose 5-phosphate (Rib-5-P), respectively. This chain is Phosphopentomutase, found in Legionella pneumophila (strain Paris).